The following is a 410-amino-acid chain: 3-phenylpropionate/cinnamic acid dioxygenase ferredoxin--NAD(+) reductase component (410 aa).

Residue 5–36 participates in FAD binding; sequence TIIIVGGGQAAAMAAASLRQQGFTGELHLFSD. 146–184 provides a ligand contact to NAD(+); sequence SVVIVGAGTIGLELAASATQRSAAQRSAAQRRCKVTVIE.

It belongs to the bacterial ring-hydroxylating dioxygenase ferredoxin reductase family. As to quaternary structure, this dioxygenase system consists of four proteins: the two subunits of the hydroxylase component (HcaE and HcaF), a ferredoxin (HcaC) and a ferredoxin reductase (HcaD). Requires FAD as cofactor.

The catalysed reaction is 2 reduced [2Fe-2S]-[ferredoxin] + NAD(+) + H(+) = 2 oxidized [2Fe-2S]-[ferredoxin] + NADH. It participates in aromatic compound metabolism; 3-phenylpropanoate degradation. Its function is as follows. Part of the multicomponent 3-phenylpropionate dioxygenase, that converts 3-phenylpropionic acid (PP) and cinnamic acid (CI) into 3-phenylpropionate-dihydrodiol (PP-dihydrodiol) and cinnamic acid-dihydrodiol (CI-dihydrodiol), respectively. This Shigella flexneri serotype 5b (strain 8401) protein is 3-phenylpropionate/cinnamic acid dioxygenase ferredoxin--NAD(+) reductase component.